The primary structure comprises 238 residues: DnaA regulatory inactivator Hda (238 aa).

This sequence belongs to the DnaA family. HdA subfamily. As to quaternary structure, the active form seems to be an ADP-bound monomer. Forms the RIDA complex (regulatory inactivation of DnaA) of ATP-DnaA, ADP-Hda and the DNA-loaded beta sliding clamp (dnaN).

In terms of biological role, mediates the interaction of DNA replication initiator protein DnaA with DNA polymerase subunit beta sliding clamp (dnaN). Stimulates hydrolysis of ATP-DnaA to ADP-DnaA, rendering DnaA inactive for reinitiation, a process called regulatory inhibition of DnaA or RIDA. The sequence is that of DnaA regulatory inactivator Hda from Pectobacterium atrosepticum (strain SCRI 1043 / ATCC BAA-672) (Erwinia carotovora subsp. atroseptica).